The sequence spans 207 residues: Probable GTP-binding protein EngB (207 aa).

An EngB-type G domain is found at 25-202; that stretch reads DVPEIAFVGR…ATLLWQWAHP (178 aa). GTP contacts are provided by residues 33-40, 60-64, 82-85, 152-155, and 181-183; these read GRSNAGKS, GRTQH, DLPG, TKAD, and FSA. S40 and T62 together coordinate Mg(2+).

The protein belongs to the TRAFAC class TrmE-Era-EngA-EngB-Septin-like GTPase superfamily. EngB GTPase family. Mg(2+) is required as a cofactor.

Necessary for normal cell division and for the maintenance of normal septation. This Albidiferax ferrireducens (strain ATCC BAA-621 / DSM 15236 / T118) (Rhodoferax ferrireducens) protein is Probable GTP-binding protein EngB.